The sequence spans 126 residues: Fluoride-specific ion channel FluC 2 (126 aa).

4 helical membrane passes run 11–31, 36–56, 69–89, and 93–113; these read VLLI…ICEH, LGIL…MYDA, AFGT…VQSF, and FLPA…GVFF. Na(+) is bound by residues G76 and T79.

Belongs to the fluoride channel Fluc/FEX (TC 1.A.43) family.

The protein localises to the cell membrane. It carries out the reaction fluoride(in) = fluoride(out). Na(+) is not transported, but it plays an essential structural role and its presence is essential for fluoride channel function. Its function is as follows. Fluoride-specific ion channel. Important for reducing fluoride concentration in the cell, thus reducing its toxicity. The chain is Fluoride-specific ion channel FluC 2 from Methanosarcina mazei (strain ATCC BAA-159 / DSM 3647 / Goe1 / Go1 / JCM 11833 / OCM 88) (Methanosarcina frisia).